The sequence spans 497 residues: Serine hydroxymethyltransferase (497 aa).

Residues leucine 176 and 180 to 182 (GHL) each bind (6S)-5,6,7,8-tetrahydrofolate. N6-(pyridoxal phosphate)lysine is present on lysine 289.

It belongs to the SHMT family. As to quaternary structure, homodimer. The cofactor is pyridoxal 5'-phosphate.

It localises to the cytoplasm. The catalysed reaction is (6R)-5,10-methylene-5,6,7,8-tetrahydrofolate + glycine + H2O = (6S)-5,6,7,8-tetrahydrofolate + L-serine. Its pathway is one-carbon metabolism; tetrahydrofolate interconversion. It functions in the pathway amino-acid biosynthesis; glycine biosynthesis; glycine from L-serine: step 1/1. Catalyzes the reversible interconversion of serine and glycine with tetrahydrofolate (THF) serving as the one-carbon carrier. This reaction serves as the major source of one-carbon groups required for the biosynthesis of purines, thymidylate, methionine, and other important biomolecules. Also exhibits THF-independent aldolase activity toward beta-hydroxyamino acids, producing glycine and aldehydes, via a retro-aldol mechanism. The polypeptide is Serine hydroxymethyltransferase (Chlamydia abortus (strain DSM 27085 / S26/3) (Chlamydophila abortus)).